A 294-amino-acid polypeptide reads, in one-letter code: Phosphoribosylaminoimidazole-succinocarboxamide synthase (294 aa).

Belongs to the SAICAR synthetase family.

The catalysed reaction is 5-amino-1-(5-phospho-D-ribosyl)imidazole-4-carboxylate + L-aspartate + ATP = (2S)-2-[5-amino-1-(5-phospho-beta-D-ribosyl)imidazole-4-carboxamido]succinate + ADP + phosphate + 2 H(+). The protein operates within purine metabolism; IMP biosynthesis via de novo pathway; 5-amino-1-(5-phospho-D-ribosyl)imidazole-4-carboxamide from 5-amino-1-(5-phospho-D-ribosyl)imidazole-4-carboxylate: step 1/2. This chain is Phosphoribosylaminoimidazole-succinocarboxamide synthase, found in Rhodococcus opacus (strain B4).